We begin with the raw amino-acid sequence, 279 residues long: MQVATTKKALIDALLHHKSVGLVPTMGALHSGHASLVKAARAENDTVVASIFVNPLQFEALGDCDDYRNYPRQLDADLALLEEAGVDIVFAPDVEEMYPGGLPLVWARTGSIGTKLEGASRPGHFDGVATVVAKLFNLVRPDRAYFGQKDAQQVAVIRRLVADLDIPVEIRPVPIIRSADGLAESSRNQRLSADQRAQALVLPQVLSGLQRRKAAGEALDIQGARDTLASADGVRLDHLEIVDPATLEPLEIDGLLTQPALVVAAIFVGPVRLIDNIEL.

Residue 26–33 (MGALHSGH) participates in ATP binding. The active-site Proton donor is the His-33. A (R)-pantoate-binding site is contributed by Gln-57. Gln-57 contacts beta-alanine. 147–150 (GQKD) serves as a coordination point for ATP. Gln-153 is a (R)-pantoate binding site. ATP is bound by residues Ile-176 and 184 to 187 (ESSR).

The protein belongs to the pantothenate synthetase family. As to quaternary structure, homodimer.

The protein localises to the cytoplasm. The enzyme catalyses (R)-pantoate + beta-alanine + ATP = (R)-pantothenate + AMP + diphosphate + H(+). The protein operates within cofactor biosynthesis; (R)-pantothenate biosynthesis; (R)-pantothenate from (R)-pantoate and beta-alanine: step 1/1. In terms of biological role, catalyzes the condensation of pantoate with beta-alanine in an ATP-dependent reaction via a pantoyl-adenylate intermediate. The sequence is that of Pantothenate synthetase from Corynebacterium glutamicum (strain R).